The following is a 353-amino-acid chain: Tyrosine recombinase XerC (353 aa).

In terms of domain architecture, Core-binding (CB) spans 40–145 (LKYPPILEEF…SLRSFYNYLY (106 aa)). A Tyr recombinase domain is found at 167 to 346 (RHPIYLTLEE…DDSQLREAVN (180 aa)). Catalysis depends on residues R205, K227, H297, R300, and H324. The active-site O-(3'-phospho-DNA)-tyrosine intermediate is Y333.

It belongs to the 'phage' integrase family.

Its subcellular location is the cytoplasm. In terms of biological role, site-specific tyrosine recombinase, which acts by catalyzing the cutting and rejoining of the recombining DNA molecules. The sequence is that of Tyrosine recombinase XerC (xerC) from Caldanaerobacter subterraneus subsp. tengcongensis (strain DSM 15242 / JCM 11007 / NBRC 100824 / MB4) (Thermoanaerobacter tengcongensis).